Consider the following 473-residue polypeptide: H(+)/Cl(-) exchange transporter ClcA (473 aa).

The Cytoplasmic segment spans residues 1 to 32 (MKTDTSTFLAQQIVRLRRRDQIRRLMQRDKTP). Residues 33-69 (LAILFMAAVVGTLTGLVGVAFEKAVSWVQNMRIGALV) form a helical membrane-spanning segment. Residues 70–76 (QVADHAF) lie on the Periplasmic side of the membrane. Residues 77 to 100 (LLWPLAFILSALLAMVGYFLVRKF) form a helical membrane-spanning segment. The short motif at 106–110 (GSGIP) is the Selectivity filter part_1 element. Chloride is bound at residue S107. The segment at residues 109 to 116 (IPEIEGAL) is an intramembrane region (helical). Residues 117–123 (EELRPVR) are Cytoplasmic-facing. 2 helical membrane passes run 124–141 (WWRVLPVKFIGGMGTLGA) and 148–166 (EGPTVQIGGNLGRMVLDVF). A Selectivity filter part_2 motif is present at residues 146–150 (GREGP). Residues 167–176 (RMRSAEARHT) are Cytoplasmic-facing. 2 consecutive intramembrane regions (helical) follow at residues 177–189 (LLATGAAAGLSAA) and 193–201 (PLAGILFII). Topologically, residues 202-214 (EEMRPQFRYNLIS) are cytoplasmic. A helical membrane pass occupies residues 215-232 (IKAVFTGVIMSSIVFRIF). At 233 to 252 (NGEAPIIEVGKLSDAPVNTL) the chain is on the periplasmic side. A helical membrane pass occupies residues 253–281 (WLYLILGIIFGCVGPVFNSLVLRTQDMFQ). At 282–287 (RFHGGE) the chain is on the cytoplasmic side. Residues 288–309 (IKKWVLMGGAIGGLCGILGLIE) traverse the membrane as a helical segment. The Periplasmic portion of the chain corresponds to 310–329 (PEAAGGGFNLIPIAAAGNFS). 2 helical membrane-spanning segments follow: residues 330–349 (VGLLLFIFIARVVTTLLCFS) and 355–376 (GIFAPMLALGTLLGTAFGMAAA). A Selectivity filter part_3 motif is present at residues 355 to 359 (GIFAP). Chloride is bound by residues I356 and F357. Residues 377-386 (VLFPQYHLEA) are Periplasmic-facing. Residues 387 to 401 (GTFAIAGMGALMAAS) constitute an intramembrane region (helical). An intramembrane region (note=Loop between two helices) is located at residues 402–404 (VRA). An intramembrane region (helical) is located at residues 405 to 416 (PLTGIVLVLEMT). The note=Loop between two helices intramembrane region spans 417–421 (DNYQL). The helical transmembrane segment at 422 to 438 (ILPMIITCLGATLLAQF) threads the bilayer. Residues 439 to 473 (LGGKPLYSTILARTLAKQDAEQAAKSQNAPAGENT) lie on the Cytoplasmic side of the membrane. Y445 lines the chloride pocket.

Belongs to the chloride channel (TC 2.A.49) family. ClcA subfamily. In terms of assembly, homodimer.

The protein resides in the cell inner membrane. The enzyme catalyses 2 chloride(in) + H(+)(out) = 2 chloride(out) + H(+)(in). In terms of biological role, proton-coupled chloride transporter. Functions as antiport system and exchanges two chloride ions for 1 proton. Probably acts as an electrical shunt for an outwardly-directed proton pump that is linked to amino acid decarboxylation, as part of the extreme acid resistance (XAR) response. This Salmonella gallinarum (strain 287/91 / NCTC 13346) protein is H(+)/Cl(-) exchange transporter ClcA.